Consider the following 448-residue polypeptide: Glucose-6-phosphate isomerase (448 aa).

The active-site Proton donor is Glu-290. Active-site residues include His-311 and Lys-425.

Belongs to the GPI family.

It localises to the cytoplasm. The enzyme catalyses alpha-D-glucose 6-phosphate = beta-D-fructose 6-phosphate. It participates in carbohydrate biosynthesis; gluconeogenesis. It functions in the pathway carbohydrate degradation; glycolysis; D-glyceraldehyde 3-phosphate and glycerone phosphate from D-glucose: step 2/4. In terms of biological role, catalyzes the reversible isomerization of glucose-6-phosphate to fructose-6-phosphate. The protein is Glucose-6-phosphate isomerase of Lactococcus lactis subsp. lactis (strain IL1403) (Streptococcus lactis).